The chain runs to 90 residues: MSEEQLKAFIAKVQADTSLQEQLKVEGADVVAIAKASGFAITTEDLKAHQANSQKNLSDAELEGVAGGTIGGTIVSITCETCDLLVGKMC.

A propeptide spanning residues 1–68 (MSEEQLKAFI…DAELEGVAGG (68 aa)) is cleaved from the precursor. A 2,3-didehydrobutyrine mark is found at Thr-69 and Thr-73. The lanthionine (Ser-Cys) cross-link spans 76–79 (SITC). 2 cross-links (beta-methyllanthionine (Thr-Cys)) span residues 78–82 (TCETC) and 81–90 (TCDLLVGKMC).

In terms of processing, cross-links are proved in vitro, when coepressed in E.coli with the ProcM lanthionine synthetase. Post-translationally, the lanthionine residue has a DL configuration (with 2S,6R stereochemistry), whereas the beta-methyllanthionine residues have a DL configuration (with 2S,3S,6R stereochemistry). Maturation of prochlorosin involves the enzymatic conversion of Thr, and Ser into dehydrated AA and the formation of thioether bonds with cysteines. This is followed by membrane translocation and cleavage of the modified precursor.

The protein resides in the secreted. In terms of biological role, lanthionine-containing peptide (lantipeptide) with unknown function. Does not show antibiotic activity against Lactococcus lactis 117 and Bacillus subtilis 6633 bacteria. Organisms that produce this peptide live in oligotrophic environments at very dilute concentrations, suggesting this peptide is not secreted to influence other bacteria. The protein is Lantipeptide prochlorosin 1.7 of Prochlorococcus marinus (strain MIT 9313).